A 306-amino-acid polypeptide reads, in one-letter code: GTP-binding protein RAD (306 aa).

Positions 1 to 13 (MTLNGGSGAGGSR) are enriched in gly residues. The tract at residues 1-91 (MTLNGGSGAG…GDSGSEDGVY (91 aa)) is disordered. Arginine 23 is modified (omega-N-methylarginine). Serine 25 carries the phosphoserine modification. Positions 56-88 (AATAAGTRTQGQRLDWPEGSSDSLSSGDSGSED) are enriched in low complexity. Residues 97–104 (GAPGVGKS) and 201–204 (NKSD) contribute to the GTP site. The segment at 276–295 (AKLFLGRIVARNSRKMAFLA) is calmodulin-binding.

The protein belongs to the small GTPase superfamily. RGK family. Interacts with Calmodulin preferentially in the inactive, GDP-bound form. Interacts with CAMK2D. Interacts with CACNB2; interaction may be involved in beta-adrenergic regulation of heart rate and contractile force. Interaction with CACNB2 regulates the trafficking of CACNA1C to the cell membrane.

The protein resides in the cell membrane. Its function is as follows. May regulate basal voltage-dependent L-type Ca(2+) currents and be required for beta-adrenergic augmentation of Ca(2+) influx in cardiomyocytes, thereby regulating increases in heart rate and contractile force. May play an important role in cardiac antiarrhythmia via the strong suppression of voltage-dependent L-type Ca(2+) currents. Regulates voltage-gated L-type calcium channel subunit alpha-1C trafficking to the cell membrane. Inhibits cardiac hypertrophy through the calmodulin-dependent kinase II (CaMKII) pathway. Inhibits phosphorylation and activation of CAMK2D. This is GTP-binding protein RAD (Rrad) from Rattus norvegicus (Rat).